A 66-amino-acid polypeptide reads, in one-letter code: Putative ankyrin repeat protein RF_pd14 (66 aa).

The stretch at 14-66 (KLNQKLMRAAATGDIEAVQKLVLRGADIYCRDHQGDTALSLAAGSGYLDILDI) is one ANK repeat.

The polypeptide is Putative ankyrin repeat protein RF_pd14 (Rickettsia felis (strain ATCC VR-1525 / URRWXCal2) (Rickettsia azadi)).